Reading from the N-terminus, the 214-residue chain is Adenylate kinase (214 aa).

Residue 10–15 (GAGKGT) coordinates ATP. The segment at 30–59 (STGDMLRSAVKAGTELGLKAKALMDHGKLV) is NMP. AMP contacts are provided by residues threonine 31, arginine 36, 57 to 59 (KLV), 85 to 88 (GFPR), and glutamine 92. An LID region spans residues 122–159 (GRRIHAPSGRVYHIKFNPPVVENKDDVTGEELTVRKDD). ATP-binding positions include arginine 123 and 132–133 (VY). Arginine 156 and arginine 167 together coordinate AMP. Arginine 200 lines the ATP pocket.

The protein belongs to the adenylate kinase family. As to quaternary structure, monomer.

The protein resides in the cytoplasm. The catalysed reaction is AMP + ATP = 2 ADP. The protein operates within purine metabolism; AMP biosynthesis via salvage pathway; AMP from ADP: step 1/1. Catalyzes the reversible transfer of the terminal phosphate group between ATP and AMP. Plays an important role in cellular energy homeostasis and in adenine nucleotide metabolism. The chain is Adenylate kinase from Photorhabdus laumondii subsp. laumondii (strain DSM 15139 / CIP 105565 / TT01) (Photorhabdus luminescens subsp. laumondii).